Reading from the N-terminus, the 248-residue chain is Pyridoxine 5'-phosphate synthase (248 aa).

N10 is a 3-amino-2-oxopropyl phosphate binding site. 12–13 (DH) serves as a coordination point for 1-deoxy-D-xylulose 5-phosphate. Position 21 (R21) interacts with 3-amino-2-oxopropyl phosphate. The active-site Proton acceptor is H46. Residues R48 and H53 each coordinate 1-deoxy-D-xylulose 5-phosphate. The Proton acceptor role is filled by E73. T103 serves as a coordination point for 1-deoxy-D-xylulose 5-phosphate. H194 (proton donor) is an active-site residue. 3-amino-2-oxopropyl phosphate contacts are provided by residues G195 and 216-217 (GH).

This sequence belongs to the PNP synthase family. Homooctamer; tetramer of dimers.

The protein resides in the cytoplasm. The enzyme catalyses 3-amino-2-oxopropyl phosphate + 1-deoxy-D-xylulose 5-phosphate = pyridoxine 5'-phosphate + phosphate + 2 H2O + H(+). Its pathway is cofactor biosynthesis; pyridoxine 5'-phosphate biosynthesis; pyridoxine 5'-phosphate from D-erythrose 4-phosphate: step 5/5. In terms of biological role, catalyzes the complicated ring closure reaction between the two acyclic compounds 1-deoxy-D-xylulose-5-phosphate (DXP) and 3-amino-2-oxopropyl phosphate (1-amino-acetone-3-phosphate or AAP) to form pyridoxine 5'-phosphate (PNP) and inorganic phosphate. The polypeptide is Pyridoxine 5'-phosphate synthase (Legionella pneumophila (strain Paris)).